The sequence spans 105 residues: MKVHKGDTVLVIAGKDKGAKGKVIQAYPATNKVLVEGVNRIKKHTAVSANERGASSGGIVTQEAPIHVSNVAVVDSDGNPTRVGYRTDEESGKRVRISRKNGKDI.

Residues 75–105 (DSDGNPTRVGYRTDEESGKRVRISRKNGKDI) are disordered. Positions 94–105 (RVRISRKNGKDI) are enriched in basic residues.

Belongs to the universal ribosomal protein uL24 family. In terms of assembly, part of the 50S ribosomal subunit.

In terms of biological role, one of two assembly initiator proteins, it binds directly to the 5'-end of the 23S rRNA, where it nucleates assembly of the 50S subunit. Its function is as follows. One of the proteins that surrounds the polypeptide exit tunnel on the outside of the subunit. This is Large ribosomal subunit protein uL24 from Rhodococcus jostii (strain RHA1).